A 455-amino-acid polypeptide reads, in one-letter code: Bifunctional protein GlmU (455 aa).

A pyrophosphorylase region spans residues 1-227 (MLTDIVILAA…ATEALGVNDP (227 aa)). Residues 8–11 (LAAG), Lys22, Gln73, 78–79 (GT), 100–102 (YGD), Gly137, Glu152, Asn167, and Asn225 contribute to the UDP-N-acetyl-alpha-D-glucosamine site. Mg(2+) is bound at residue Asp102. Position 225 (Asn225) interacts with Mg(2+). The interval 228-248 (VQLAILERVFQRQQLRALQMQ) is linker. The segment at 249–455 (GLRVADPARV…HWQRPRRDKK (207 aa)) is N-acetyltransferase. UDP-N-acetyl-alpha-D-glucosamine-binding residues include Arg331 and Lys349. His361 acts as the Proton acceptor in catalysis. Residues Tyr364 and Asn375 each contribute to the UDP-N-acetyl-alpha-D-glucosamine site. Acetyl-CoA is bound by residues Ala378, 384–385 (NY), Ser403, Ala421, and Arg438. Residues 420–455 (GAGSTITKEVPPGGLTLSRSPQRTIPHWQRPRRDKK) are disordered.

This sequence in the N-terminal section; belongs to the N-acetylglucosamine-1-phosphate uridyltransferase family. The protein in the C-terminal section; belongs to the transferase hexapeptide repeat family. In terms of assembly, homotrimer. Mg(2+) is required as a cofactor.

It localises to the cytoplasm. It catalyses the reaction alpha-D-glucosamine 1-phosphate + acetyl-CoA = N-acetyl-alpha-D-glucosamine 1-phosphate + CoA + H(+). It carries out the reaction N-acetyl-alpha-D-glucosamine 1-phosphate + UTP + H(+) = UDP-N-acetyl-alpha-D-glucosamine + diphosphate. It functions in the pathway nucleotide-sugar biosynthesis; UDP-N-acetyl-alpha-D-glucosamine biosynthesis; N-acetyl-alpha-D-glucosamine 1-phosphate from alpha-D-glucosamine 6-phosphate (route II): step 2/2. The protein operates within nucleotide-sugar biosynthesis; UDP-N-acetyl-alpha-D-glucosamine biosynthesis; UDP-N-acetyl-alpha-D-glucosamine from N-acetyl-alpha-D-glucosamine 1-phosphate: step 1/1. Its pathway is bacterial outer membrane biogenesis; LPS lipid A biosynthesis. Its function is as follows. Catalyzes the last two sequential reactions in the de novo biosynthetic pathway for UDP-N-acetylglucosamine (UDP-GlcNAc). The C-terminal domain catalyzes the transfer of acetyl group from acetyl coenzyme A to glucosamine-1-phosphate (GlcN-1-P) to produce N-acetylglucosamine-1-phosphate (GlcNAc-1-P), which is converted into UDP-GlcNAc by the transfer of uridine 5-monophosphate (from uridine 5-triphosphate), a reaction catalyzed by the N-terminal domain. The polypeptide is Bifunctional protein GlmU (Acidithiobacillus ferrooxidans (strain ATCC 23270 / DSM 14882 / CIP 104768 / NCIMB 8455) (Ferrobacillus ferrooxidans (strain ATCC 23270))).